Here is a 292-residue protein sequence, read N- to C-terminus: Probable septum site-determining protein MinC (292 aa).

The disordered stretch occupies residues Gln109–Thr188. The segment covering Gln140–Asp150 has biased composition (acidic residues). A compositionally biased stretch (polar residues) spans Ala171–Leu185.

This sequence belongs to the MinC family. In terms of assembly, interacts with MinD and FtsZ.

Its function is as follows. Cell division inhibitor that blocks the formation of polar Z ring septums. Rapidly oscillates between the poles of the cell to destabilize FtsZ filaments that have formed before they mature into polar Z rings. Prevents FtsZ polymerization. This Bordetella pertussis (strain Tohama I / ATCC BAA-589 / NCTC 13251) protein is Probable septum site-determining protein MinC.